We begin with the raw amino-acid sequence, 1482 residues long: Lysine-specific demethylase rbr-2 (1482 aa).

The tract at residues 1-45 (MRGRRQEDIATTSSAPSTSTSHKKKTVSSNGSFRPRTQSNPGGKM) is disordered. Low complexity predominate over residues 11-20 (TTSSAPSTST). Positions 30 to 41 (NGSFRPRTQSNP) are enriched in polar residues. The JmjN domain occupies 61 to 102 (APVYYPTSEEFADPIEYVAKIRPDAERYGVVKIVPPSDFKPP). The ARID domain occupies 126-223 (VKEKHTFIER…HIEPFNRNLK (98 aa)). The disordered stretch occupies residues 244–316 (YQHHHGTMRS…SKTEEDEEEN (73 aa)). A compositionally biased stretch (basic and acidic residues) spans 251–264 (MRSEPENTDGKNTE). Positions 277–288 (GRRRSKNKKPVP) are enriched in basic residues. The PHD-type 1 zinc finger occupies 322–374 (QVYCVSCNEGKDEDLLLLCDIEGCNSGRHTYCCDPVLDEVPEGEWRCPKCIES). Positions 471–637 (QYANHAWNLN…KGRECVQSYS (167 aa)) constitute a JmjC domain. 3 residues coordinate Fe cation: His517, Asp520, and His605. The PHD-type 2 zinc-finger motif lies at 1206–1260 (LEGCCCLGGNKSDSSESVLSCIMCESQFHVRCCEWSTFFQHLPKGCFMCVRCLRG). Positions 1361-1403 (QQRPVKSKPSASLFDPKLNSKRKRPNPSQKDSSKSKSRKRQGQ) are disordered. Residues 1416 to 1471 (FKSCQARSCLKPFGDSVNWVMCDAGCKNWFHVICVGFTLREINDMHEYRCSSCLDH) form a PHD-type 3 zinc finger.

The protein belongs to the JARID1 histone demethylase family. The cofactor is Fe(2+).

The protein resides in the nucleus. It catalyses the reaction N(6),N(6),N(6)-trimethyl-L-lysyl(4)-[histone H3] + 3 2-oxoglutarate + 3 O2 = L-lysyl(4)-[histone H3] + 3 formaldehyde + 3 succinate + 3 CO2. Histone demethylase that specifically demethylates 'Lys-4' of histone H3, thereby playing a central role in histone code. Does not demethylate histone H3 'Lys-9', H3 'Lys-27', H3 'Lys-36', H3 'Lys-79' or H4 'Lys-20'. Demethylates trimethylated and dimethylated but not monomethylated H3 'Lys-4'. Involved in larval development and vulva formation. The protein is Lysine-specific demethylase rbr-2 (rbr-2) of Caenorhabditis briggsae.